Reading from the N-terminus, the 4007-residue chain is PKS-NRPS hybrid synthetase psoA (4007 aa).

Residues 8–444 form the Ketosynthase family 3 (KS3) domain; sequence KEPIAIIGTG…GTNCHAIVES (437 aa). Active-site for beta-ketoacyl synthase activity residues include C182, H321, and H364. Residues 575-897 are malonyl-CoA:ACP transacylase (MAT) domain; sequence VFTGQGAQWA…VLDRKADDIL (323 aa). The N-terminal hotdog fold stretch occupies residues 969–1105; the sequence is HPLLGSRTPD…GHIRITLAAE (137 aa). The interval 969 to 1147 is dehydratase (DH) domain; sequence HPLLGSRTPD…LSYSGPFRAM (179 aa). Residues 969-1276 enclose the PKS/mFAS DH domain; sequence HPLLGSRTPD…MSSFLPASEK (308 aa). H1001 serves as the catalytic Proton acceptor; for dehydratase activity. Residues 1120–1276 are C-terminal hotdog fold; sequence DLLPTSVDRF…MSSFLPASEK (157 aa). Catalysis depends on D1179, which acts as the Proton donor; for dehydratase activity. The segment at 2131–2305 is ketoreductase (KR) domain; that stretch reads TYLLVGLTGH…PASVIDIGMV (175 aa). Residues 2418–2495 form the Carrier 1 domain; that stretch reads EARKVMENAL…QICDEVVASL (78 aa). An O-(pantetheine 4'-phosphoryl)serine modification is found at S2455. The segment at 2513 to 2550 is disordered; that stretch reads PAHKLRPWDKPSADTKRTDSIAPVPRSQIAANGPNGLP. The span at 2518–2531 shows a compositional bias: basic and acidic residues; that stretch reads RPWDKPSADTKRTD. Residues 2589 to 2885 form a condensation (C) domain region; that stretch reads QPLSLGQSRL…LETIPLWFKV (297 aa). The adenylation (A) domain stretch occupies residues 3076-3478; that stretch reads TYVQLAERAN…LGDVARALVQ (403 aa). A Carrier 2 domain is found at 3576 to 3652; that stretch reads TPTEARLRDV…LLAARLDGTS (77 aa). At S3612 the chain carries O-(pantetheine 4'-phosphoryl)serine. Residues 3696 to 3920 are reductase (R) domain; it reads LTGATGFLGG…INVETVSNNI (225 aa).

This sequence in the C-terminal section; belongs to the NRP synthetase family.

It functions in the pathway secondary metabolite biosynthesis. PKS-NRPS hybrid synthetase; part of the gene cluster that mediates the biosynthesis of pseurotin A, a competitive inhibitor of chitin synthase and an inducer of nerve-cell proliferation. The PKS-NRPS hybrid synthetase psoA is responsible for the biosynthesis of azaspirene, one of the first intermediates having the 1-oxa-7-azaspiro[4,4]-non-2-ene-4,6-dione core of pseurotin, via condensation of one acetyl-CoA, 4 malonyl-CoA, and a L-phenylalanine molecule. The dual-functional monooxygenase/methyltransferase psoF seems to be involved in the addition of the C3 methyl group onto the pseurotin scaffold. Azaspirene is then converted to synerazol through 4 steps including oxidation of C17 by the cytochrome P450 monooxygenase psoD, O-methylation of the hydroxy group of C8 by the methyltransferase psoC, and the trans-to-cis isomerization of the C13 olefin by the glutathione S-transferase psoE. The fourth step of synerazol production is performed by the dual-functional monooxygenase/methyltransferase psoF which seems to catalyze the epoxidation of the intermediate deepoxy-synerazol. Synerazol can be attacked by a water molecule nonenzymatically at two different positions to yield two diol products, pseurotin A and pseurotin D. In Aspergillus fumigatus (strain ATCC MYA-4609 / CBS 101355 / FGSC A1100 / Af293) (Neosartorya fumigata), this protein is PKS-NRPS hybrid synthetase psoA.